The chain runs to 89 residues: Small ribosomal subunit protein uS15 (89 aa).

Over residues 1 to 11 (MSITAERKAEV) the composition is skewed to basic and acidic residues. The tract at residues 1–24 (MSITAERKAEVIKTNAKKAGDTGS) is disordered.

It belongs to the universal ribosomal protein uS15 family. Part of the 30S ribosomal subunit. Forms a bridge to the 50S subunit in the 70S ribosome, contacting the 23S rRNA.

Functionally, one of the primary rRNA binding proteins, it binds directly to 16S rRNA where it helps nucleate assembly of the platform of the 30S subunit by binding and bridging several RNA helices of the 16S rRNA. Its function is as follows. Forms an intersubunit bridge (bridge B4) with the 23S rRNA of the 50S subunit in the ribosome. The polypeptide is Small ribosomal subunit protein uS15 (Afipia carboxidovorans (strain ATCC 49405 / DSM 1227 / KCTC 32145 / OM5) (Oligotropha carboxidovorans)).